An 89-amino-acid chain; its full sequence is Probable Fe(2+)-trafficking protein (89 aa).

It belongs to the Fe(2+)-trafficking protein family.

Could be a mediator in iron transactions between iron acquisition and iron-requiring processes, such as synthesis and/or repair of Fe-S clusters in biosynthetic enzymes. This Legionella pneumophila (strain Lens) protein is Probable Fe(2+)-trafficking protein.